The primary structure comprises 387 residues: 3-ketoacyl-CoA thiolase (387 aa).

C91 functions as the Acyl-thioester intermediate in the catalytic mechanism. Active-site proton acceptor residues include H343 and C373.

It belongs to the thiolase-like superfamily. Thiolase family. Heterotetramer of two alpha chains (FadB) and two beta chains (FadA).

The protein localises to the cytoplasm. The enzyme catalyses an acyl-CoA + acetyl-CoA = a 3-oxoacyl-CoA + CoA. The protein operates within lipid metabolism; fatty acid beta-oxidation. In terms of biological role, catalyzes the final step of fatty acid oxidation in which acetyl-CoA is released and the CoA ester of a fatty acid two carbons shorter is formed. In Serratia proteamaculans (strain 568), this protein is 3-ketoacyl-CoA thiolase.